The following is a 372-amino-acid chain: 4-hydroxy-3-methylbut-2-en-1-yl diphosphate synthase (flavodoxin) (372 aa).

Residues Cys-270, Cys-273, Cys-305, and Glu-312 each contribute to the [4Fe-4S] cluster site.

Belongs to the IspG family. It depends on [4Fe-4S] cluster as a cofactor.

The enzyme catalyses (2E)-4-hydroxy-3-methylbut-2-enyl diphosphate + oxidized [flavodoxin] + H2O + 2 H(+) = 2-C-methyl-D-erythritol 2,4-cyclic diphosphate + reduced [flavodoxin]. The protein operates within isoprenoid biosynthesis; isopentenyl diphosphate biosynthesis via DXP pathway; isopentenyl diphosphate from 1-deoxy-D-xylulose 5-phosphate: step 5/6. Converts 2C-methyl-D-erythritol 2,4-cyclodiphosphate (ME-2,4cPP) into 1-hydroxy-2-methyl-2-(E)-butenyl 4-diphosphate. The sequence is that of 4-hydroxy-3-methylbut-2-en-1-yl diphosphate synthase (flavodoxin) from Pseudoalteromonas translucida (strain TAC 125).